A 302-amino-acid polypeptide reads, in one-letter code: RELT-like protein 2 (302 aa).

A helical membrane pass occupies residues 15-35; sequence LYMLFLLVLVFFLMGLVGFMI. Disordered regions lie at residues 47–68, 135–164, 177–212, and 247–302; these read RTSR…DDVN, CSRS…TTVF, RYGL…GQPR, and VPCT…AGGM. Ser52 is subject to Phosphoserine. Composition is skewed to basic and acidic residues over residues 148-158 and 177-188; these read RSKEGKGRPRP and RYGLHEHRDGSP. Residues 277–294 are compositionally biased toward polar residues; it reads QEANGQPTKLDTSGQQDS.

It belongs to the RELT family. As to quaternary structure, interacts with RELT, RELL1, OXSR1, PLSCR1 and TRAF2.

It is found in the cell membrane. In terms of biological role, induces activation of MAPK14/p38 cascade, when overexpressed. Induces apoptosis, when overexpressed. In Rattus norvegicus (Rat), this protein is RELT-like protein 2 (Rell2).